The primary structure comprises 281 residues: NADH-cytochrome b5 reductase 1 (281 aa).

The helical transmembrane segment at 2 to 22 threads the bilayer; the sequence is VPGKFIFTATFVLLCTIIAVV. The region spanning 37 to 141 is the FAD-binding FR-type domain; it reads EKLQEFPLVA…RGPKGFYHYQ (105 aa). Residues 121–136 and 147–179 each bind FAD; these read AQLN…GPKG and EIGM…KVSL.

Belongs to the flavoprotein pyridine nucleotide cytochrome reductase family. As to quaternary structure, monomer. Component of the 2-(3-amino-3-carboxypropyl)histidine synthase complex composed of DPH1, DPH2, DPH3 and a NADH-dependent reductase, predominantly CBR1. The cofactor is FAD.

It is found in the mitochondrion outer membrane. The catalysed reaction is 2 Fe(III)-[cytochrome b5] + NADH = 2 Fe(II)-[cytochrome b5] + NAD(+) + H(+). It carries out the reaction 2 Fe(3+)-[Dph3] + NADH = 2 Fe(2+)-[Dph3] + NAD(+) + H(+). It functions in the pathway protein modification; peptidyl-diphthamide biosynthesis. Functionally, NADH-dependent reductase for DPH3 and cytochrome b5. Required for the first step of diphthamide biosynthesis, a post-translational modification of histidine which occurs in elongation factor 2. DPH1 and DPH2 transfer a 3-amino-3-carboxypropyl (ACP) group from S-adenosyl-L-methionine (SAM) to a histidine residue, the reaction is assisted by a reduction system comprising DPH3 and a NADH-dependent reductase, predominantly CBR1. By reducing DPH3, also involved in the formation of the tRNA wobble base modification mcm5s 2U (5-methoxycarbonylmethyl-2-thiouridine), mediated by the elongator complex. The cytochrome b5/NADH cytochrome b5 reductase electron transfer system supports the catalytic activity of several sterol biosynthetic enzymes. The sequence is that of NADH-cytochrome b5 reductase 1 (CBR1) from Kluyveromyces lactis (strain ATCC 8585 / CBS 2359 / DSM 70799 / NBRC 1267 / NRRL Y-1140 / WM37) (Yeast).